Reading from the N-terminus, the 298-residue chain is Arginase (298 aa).

Mn(2+) is bound by residues H98, D121, H123, and D125. Residues 123–127 (HGDLN), 134–136 (SGN), and D177 each bind substrate. Mn(2+) contacts are provided by D225 and D227. Positions 239 and 270 each coordinate substrate.

Belongs to the arginase family. The cofactor is Mn(2+).

It catalyses the reaction L-arginine + H2O = urea + L-ornithine. It functions in the pathway nitrogen metabolism; urea cycle; L-ornithine and urea from L-arginine: step 1/1. The protein is Arginase (rocF) of Brevibacillus brevis (Bacillus brevis).